The chain runs to 588 residues: Protein cereblon (588 aa).

Disordered stretches follow at residues 1 to 107 (MDDE…DDSD) and 159 to 197 (QERR…DIGF). The span at 41-50 (AWNNATQDEQ) shows a compositional bias: polar residues. The segment covering 75-85 (MVEDVLQDDTA) has biased composition (acidic residues). Residues 86-96 (SEGSHPSSDMS) are compositionally biased toward polar residues. Residues 159-168 (QERRRSRTSE) show a composition bias toward basic and acidic residues. Over residues 181–192 (NDPPPQQPPRPP) the composition is skewed to pro residues. A Lon N-terminal domain is found at 228-454 (HMLIFLHQHI…LIKSTFKDES (227 aa)). The CULT domain maps to 453–562 (ESLFFCRYCN…LAGSSVRIGK (110 aa)). Positions 458, 461, 527, and 530 each coordinate Zn(2+).

The protein belongs to the CRBN family. Likely a component of a DCX (DDB1-CUL4-X-box) protein ligase complex. May interact with pic/DDB1. In terms of processing, ubiquitinated.

It is found in the nucleus. It functions in the pathway protein modification; protein ubiquitination. In terms of biological role, substrate recognition component of a DCX (DDB1-CUL4-X-box) E3 protein ligase complex that mediates the ubiquitination and subsequent proteasomal degradation of target proteins. Has an essential role in mediating growth by negatively regulating insulin signaling. It also has a role in maintaining presynaptic function in the neuromuscular junction synapses of third-instar larvae. This is Protein cereblon from Drosophila yakuba (Fruit fly).